The following is a 227-amino-acid chain: Aspartyl protease inhibitor (227 aa).

Positions 1-15 are cleaved as a signal peptide; sequence MKLVVLCVLCGIALA. Basic and acidic residues predominate over residues 88-109; that stretch reads SLKSRMAGKKEKAVTPKEEDLP. The interval 88–116 is disordered; it reads SLKSRMAGKKEKAVTPKEEDLPKAPQKPS. Residues Cys-131 and Cys-223 are joined by a disulfide bond.

The protein belongs to the protease inhibitor I33 family.

The protein resides in the secreted. In terms of biological role, aspartyl protease inhibitor. The chain is Aspartyl protease inhibitor (API) from Ostertagia ostertagi (Brown stomach worm).